Consider the following 348-residue polypeptide: Ninja-family protein AFP2 (348 aa).

The interval 186-272 (DSDGGGATGG…VDRKGKGMAT (87 aa)) is disordered. Gly residues predominate over residues 187–197 (SDGGGATGGGS). Composition is skewed to polar residues over residues 207–216 (KNQQGSSNSC) and 228–244 (CSSN…SVTR). Basic and acidic residues predominate over residues 247-267 (KVNENENEKRVRSEDSVDRKG).

This sequence belongs to the Ninja family. In terms of assembly, forms a homodimer and heterodimer with AFP1 and AFP3. Interacts with ABI5/DPBF1, DPBF2, AREB3/DPBF3, EEL/DPBF4, ABF1, ABF3/DPBF5 and ABF4/AREB2.

The protein localises to the nucleus. In terms of biological role, acts as a negative regulator of abscisic acid (ABA) response during germination through the ubiquitin-mediated proteolysis of ABI5/DPBF1. The sequence is that of Ninja-family protein AFP2 (AFP2) from Arabidopsis thaliana (Mouse-ear cress).